The following is a 148-amino-acid chain: MTSFKLVKYTPRIKKKKGLRKLARKVPTDRLLKFERVFKAQKRIHMSVFKAQRVLDEIRWRYYEETVMILNLMPYRASYPILKLVYSAAANATHYRDFDKTNLFITKAEVSRSTIMKKFRPRARGRSYSIKKTMCNITIVLNIVKKSK.

The protein belongs to the universal ribosomal protein uL22 family. Part of the 50S ribosomal subunit.

The protein resides in the plastid. It is found in the chloroplast. Its function is as follows. This protein binds specifically to 23S rRNA. Functionally, the globular domain of the protein is located near the polypeptide exit tunnel on the outside of the subunit, while an extended beta-hairpin is found that lines the wall of the exit tunnel in the center of the 70S ribosome. The polypeptide is Large ribosomal subunit protein uL22c (rpl22) (Zea mays (Maize)).